The chain runs to 683 residues: Acetyl-coenzyme A synthetase 2 (683 aa).

Residues 207–210 and Thr-326 each bind CoA; that span reads RGGK. Residues 402–404, 426–431, Asp-517, and Arg-532 each bind ATP; these read GEP and DTFWQT. Ser-540 is a CoA binding site. Position 543 (Arg-543) interacts with ATP. Arg-613 is a binding site for CoA.

This sequence belongs to the ATP-dependent AMP-binding enzyme family.

It carries out the reaction acetate + ATP + CoA = acetyl-CoA + AMP + diphosphate. The protein is Acetyl-coenzyme A synthetase 2 (ACS2) of Candida glabrata (strain ATCC 2001 / BCRC 20586 / JCM 3761 / NBRC 0622 / NRRL Y-65 / CBS 138) (Yeast).